Consider the following 463-residue polypeptide: tRNA modification GTPase MnmE (463 aa).

Positions 27, 92, and 131 each coordinate (6S)-5-formyl-5,6,7,8-tetrahydrofolate. The region spanning 234 to 386 (GIKLAIVGKP…LEDHLLKIYS (153 aa)) is the TrmE-type G domain. Asn-244 is a binding site for K(+). GTP-binding positions include 244-249 (NVGKSS), 263-269 (TNVAGTT), and 288-291 (DTAG). Mg(2+) is bound at residue Ser-248. K(+) contacts are provided by Thr-263, Val-265, and Thr-268. Thr-269 contacts Mg(2+). Residue Lys-463 coordinates (6S)-5-formyl-5,6,7,8-tetrahydrofolate.

It belongs to the TRAFAC class TrmE-Era-EngA-EngB-Septin-like GTPase superfamily. TrmE GTPase family. As to quaternary structure, homodimer. Heterotetramer of two MnmE and two MnmG subunits. Requires K(+) as cofactor.

Its subcellular location is the cytoplasm. In terms of biological role, exhibits a very high intrinsic GTPase hydrolysis rate. Involved in the addition of a carboxymethylaminomethyl (cmnm) group at the wobble position (U34) of certain tRNAs, forming tRNA-cmnm(5)s(2)U34. The sequence is that of tRNA modification GTPase MnmE from Mycoplasmopsis synoviae (strain 53) (Mycoplasma synoviae).